Here is a 172-residue protein sequence, read N- to C-terminus: Small ribosomal subunit protein uS5 (172 aa).

The S5 DRBM domain occupies 17–80 (LREKMISVNR…DEARRKMVKV (64 aa)).

Belongs to the universal ribosomal protein uS5 family. As to quaternary structure, part of the 30S ribosomal subunit. Contacts proteins S4 and S8.

With S4 and S12 plays an important role in translational accuracy. In terms of biological role, located at the back of the 30S subunit body where it stabilizes the conformation of the head with respect to the body. This Cupriavidus metallidurans (strain ATCC 43123 / DSM 2839 / NBRC 102507 / CH34) (Ralstonia metallidurans) protein is Small ribosomal subunit protein uS5.